We begin with the raw amino-acid sequence, 594 residues long: Glutamate decarboxylase 1 (594 aa).

Residues 1-13 (MASSTPSSSATSS) show a composition bias toward low complexity. The interval 1-25 (MASSTPSSSATSSNAGPDPNTTNLR) is disordered. Ser78 carries the post-translational modification Phosphoserine. Residue 190-192 (QLS) coordinates 4-aminobutanoate. Lys405 is subject to N6-(pyridoxal phosphate)lysine. Arg567 provides a ligand contact to 4-aminobutanoate.

The protein belongs to the group II decarboxylase family. As to quaternary structure, homodimer. Pyridoxal 5'-phosphate is required as a cofactor.

The catalysed reaction is L-glutamate + H(+) = 4-aminobutanoate + CO2. Functionally, catalyzes the synthesis of the inhibitory neurotransmitter gamma-aminobutyric acid (GABA) with pyridoxal 5'-phosphate as cofactor. This is Glutamate decarboxylase 1 (GAD1) from Sus scrofa (Pig).